We begin with the raw amino-acid sequence, 584 residues long: MGKTYSSPINPIPKAPKGLAIHHWLNFLQAAYRLQPGPSEFDFHQLRKFLKLAIKTPVWLNPINYSVLAGLIPKNYPGRVHEIVAILIQETPAREAPPSAPLAEDPQKPPPYPEQAQEASQCLPILHPHGAPAAHRPWQMKDLQAIKQEVSSSAPGSPQFMQTIRLAVQQFDPTAKDLHDLLQYLCSSLVASLHHQQLETLIAQAETQGITGYNPLAGPLRIQANNPNQQGLRKEYQNLWLSAFSALPGNTKDPTWAAILQGPEEPFGSFVERLNVALDNGLPEGTPKDPILRSLAYSNANKECQKLLQARGQTNSPLGEMLRACQTWTPRDKNKILMVQPKKTPPPNQPCFRCGQVGHWSRDCKQPRPPPGPCPVCQDPTHWKRDCPQLKTDTRDSEDLLLDLPCEAPNVRERKNLLRGGGLASPRTILPLIPLSQQKQPTLHIQVSFSNTPPVSVQALLDTGADITVLPACLCPPDSNLQDTTVLGAGGPSTNKFKILPCPVHIHLPFRRQPVTLTACLIDINNQWTILGRDALQQCQSSLYLADQPSKVLPVLAPKLIGLEHLPPPPEVSQFPLNQSASRL.

Gly-2 carries N-myristoyl glycine; by host lipidation. A disordered region spans residues 95–116 (EAPPSAPLAEDPQKPPPYPEQA). A PTAP/PSAP motif motif is present at residues 98–101 (PSAP). Residues 109 to 112 (PPPY) carry the PPXY motif motif. CCHC-type zinc fingers lie at residues 349–366 (QPCFRCGQVGHWSRDCKQ) and 372–389 (GPCPVCQDPTHWKRDCPQ). The 79-residue stretch at 457–535 (VQALLDTGAD…NQWTILGRDA (79 aa)) folds into the Peptidase A2 domain. Catalysis depends on Asp-462, which acts as the For protease activity; shared with dimeric partner.

Interacts with human TSG101. This interaction is essential for budding and release of viral particles. In terms of processing, specific enzymatic cleavages by the viral protease yield mature proteins. The polyprotein is cleaved during and after budding, this process is termed maturation. The protease is autoproteolytically processed at its N- and C-termini.

It localises to the virion. Its function is as follows. Matrix protein p19 targets Gag, Gag-Pro and Gag-Pro-Pol polyproteins to the plasma membrane via a multipartite membrane binding signal, that includes its myristoylated N-terminus. Also mediates nuclear localization of the preintegration complex. In terms of biological role, capsid protein p24 forms the conical core of the virus that encapsulates the genomic RNA-nucleocapsid complex. Nucleocapsid protein p15 is involved in the packaging and encapsidation of two copies of the genome. Functionally, the aspartyl protease mediates proteolytic cleavages of Gag, Gag-Pro and Gag-Pro-Pol polyproteins during or shortly after the release of the virion from the plasma membrane. Cleavages take place as an ordered, step-wise cascade to yield mature proteins. This process is called maturation. Displays maximal activity during the budding process just prior to particle release from the cell. Hydrolyzes host EIF4GI in order to shut off the capped cellular mRNA translation. The resulting inhibition of cellular protein synthesis serves to ensure maximal viral gene expression and to evade host immune response. The protein is Gag-Pro polyprotein (gag-pro) of Homo sapiens (Human).